We begin with the raw amino-acid sequence, 236 residues long: uncharacterized protein (236 aa).

The protein to M.tuberculosis Rv2557.

This is an uncharacterized protein from Mycobacterium tuberculosis (strain CDC 1551 / Oshkosh).